Here is a 488-residue protein sequence, read N- to C-terminus: MESTNLKNAKHETLVMDPISFQSKAQEVSRFSENSNPNFVSHSTPLEKSSKSSAQKNPKWKPNPVPAVFSPRNRIRERRFVVVKKNSRKEKNDSASVDCKCGAKTISNMKKCVCIAYETLRASQEEFFNNRRESVSEIGESSQNLEDGNEQVEFGDSDETRVSLMKRRREKVLEEARMSIPEFGKVMHLVKAFEKLTCFPLSKVTSKEEEDQIKQPLKWELPGMSQPKCSESETDQFTWSSSFYPSSGLILTATNLGLEQPHASVSSSWDNSVSSLNSNGGRRGRRNSFESSASMGSRRSTKKQIKVTSLKPFKLRTEERGRMKEEEFAKKLHEMTLEKAKKRIPIAQGLPWTTDEPENLVKPHVKDITIPVDLKLHSDIRAVERAEFDYQVTEKINLVEQYKTERERQQKLAEEEEIRRLRKELVPKAQPMPYFDRPFIPKRSNKHPTVPRDPKFNIPQHKKIRCCSTSSWSDTGSYMSDLLYQQDL.

The span at alanine 25–lysine 56 shows a compositional bias: polar residues. 3 disordered regions span residues alanine 25–proline 71, histidine 262–glutamine 304, and aspartate 436–asparagine 457. Low complexity predominate over residues serine 264–glycine 280.

Belongs to the TPX2 family.

The protein resides in the cytoplasm. It is found in the cytoskeleton. Binds directly to microtubules. Microtubule-destabilizing protein involved in the PIF3-dependent positive regulation of hypocotyl cell elongation via the modulation of cortical microtubules dynamic in response to light and ethylene signaling. Promotes submergence-induced and ethylene-dependent underwater hypocotyl elongation. This Arabidopsis thaliana (Mouse-ear cress) protein is Microtubule-destabilizing protein 60.